Consider the following 118-residue polypeptide: DNA-binding protein MmarC5_1518 (118 aa).

The span at 1–12 (MNPEEIRQRRLQ) shows a compositional bias: basic and acidic residues. The segment at 1–35 (MNPEEIRQRRLQEMQAKAQEQGAEDPEAQRQAQEQ) is disordered.

The protein belongs to the PDCD5 family.

The chain is DNA-binding protein MmarC5_1518 from Methanococcus maripaludis (strain C5 / ATCC BAA-1333).